A 105-amino-acid chain; its full sequence is U2-lycotoxin-Ls1d (105 aa).

The signal sequence occupies residues Met-1–Ser-17. Residues Phe-18–Arg-41 constitute a propeptide that is removed on maturation. Cystine bridges form between Cys-51–Cys-67, Cys-58–Cys-97, Cys-60–Cys-83, and Cys-69–Cys-81.

The protein belongs to the neurotoxin 04 (omega-agtx) family. 01 (type I omega-agtx) subfamily. Expressed by the venom gland.

It is found in the secreted. Its function is as follows. Insecticidal to house crickets. It induces an excitatory slow-onset impact that leads to irreversible spastic paralysis. It also modifies human voltage-gated potassium channel Kv1.5/KCNA5. Most likely, it binds to the voltage-sensing domain of the channel, suggesting it does not block the pore but prevents its opening at physiological membrane potentials. The recombinant peptide binds to the channel in an irreversible manner and slows down the hKv1.5 current activation kinetics. It is not toxic to mice, when intracranially injected (at 0.5 ug/g mouse). In Lycosa singoriensis (Wolf spider), this protein is U2-lycotoxin-Ls1d.